The primary structure comprises 718 residues: Polyribonucleotide nucleotidyltransferase (718 aa).

Mg(2+) is bound by residues D487 and D493. In terms of domain architecture, KH spans 554 to 613 (PRIETFKIPTDKIREVIGTGGKVIREIVEKTGAKVNIEDDGTVKVASSDGESIKAAIKWI). The S1 motif domain maps to 623–691 (GEIYEGTVVK…DRGKTRLSMR (69 aa)). The tract at residues 694 to 718 (DQETGEDLEAKQKAEGEAPAQATGE) is disordered.

Belongs to the polyribonucleotide nucleotidyltransferase family. Mg(2+) serves as cofactor.

Its subcellular location is the cytoplasm. The enzyme catalyses RNA(n+1) + phosphate = RNA(n) + a ribonucleoside 5'-diphosphate. In terms of biological role, involved in mRNA degradation. Catalyzes the phosphorolysis of single-stranded polyribonucleotides processively in the 3'- to 5'-direction. This chain is Polyribonucleotide nucleotidyltransferase, found in Rhodopseudomonas palustris (strain HaA2).